Reading from the N-terminus, the 271-residue chain is Formamidopyrimidine-DNA glycosylase (271 aa).

Pro-2 (schiff-base intermediate with DNA) is an active-site residue. The active-site Proton donor is the Glu-3. Lys-58 serves as the catalytic Proton donor; for beta-elimination activity. Residues His-91, Arg-110, and Arg-152 each contribute to the DNA site. The FPG-type zinc finger occupies 237 to 271; it reads RAYGRGGQPCTVCQTELKEIKLGQRTSVFCPSCQR. Arg-261 (proton donor; for delta-elimination activity) is an active-site residue.

Belongs to the FPG family. Monomer. The cofactor is Zn(2+).

The catalysed reaction is Hydrolysis of DNA containing ring-opened 7-methylguanine residues, releasing 2,6-diamino-4-hydroxy-5-(N-methyl)formamidopyrimidine.. It catalyses the reaction 2'-deoxyribonucleotide-(2'-deoxyribose 5'-phosphate)-2'-deoxyribonucleotide-DNA = a 3'-end 2'-deoxyribonucleotide-(2,3-dehydro-2,3-deoxyribose 5'-phosphate)-DNA + a 5'-end 5'-phospho-2'-deoxyribonucleoside-DNA + H(+). Involved in base excision repair of DNA damaged by oxidation or by mutagenic agents. Acts as a DNA glycosylase that recognizes and removes damaged bases. Has a preference for oxidized purines, such as 7,8-dihydro-8-oxoguanine (8-oxoG). Has AP (apurinic/apyrimidinic) lyase activity and introduces nicks in the DNA strand. Cleaves the DNA backbone by beta-delta elimination to generate a single-strand break at the site of the removed base with both 3'- and 5'-phosphates. The sequence is that of Formamidopyrimidine-DNA glycosylase from Hahella chejuensis (strain KCTC 2396).